A 220-amino-acid polypeptide reads, in one-letter code: uncharacterized protein (220 aa).

The protein belongs to the DadA oxidoreductase family. The cofactor is FAD.

This is an uncharacterized protein from Halorhodospira halophila (Ectothiorhodospira halophila).